The following is an 86-amino-acid chain: RNA-binding protein Hfq (86 aa).

Residues 12–73 enclose the Sm domain; it reads DIFLNQVRKE…ISTISPQKPV (62 aa).

It belongs to the Hfq family. In terms of assembly, homohexamer.

Its function is as follows. RNA chaperone that binds small regulatory RNA (sRNAs) and mRNAs to facilitate mRNA translational regulation in response to envelope stress, environmental stress and changes in metabolite concentrations. Also binds with high specificity to tRNAs. The polypeptide is RNA-binding protein Hfq (Caldanaerobacter subterraneus subsp. tengcongensis (strain DSM 15242 / JCM 11007 / NBRC 100824 / MB4) (Thermoanaerobacter tengcongensis)).